The sequence spans 133 residues: MQDRKFSFRKYFLISVFLIFIVSGITYFYSTQMLEKSQKCVEDNLDAKVKLVDMEDFYFDLNECLNMDDFFIPRPDFLNENLNKNLVVDGLIKNKFLDENFFKDLWIKKENLFNVDIEKENEKLIDKILEISK.

A helical membrane pass occupies residues 11-31 (YFLISVFLIFIVSGITYFYST).

The protein resides in the membrane. This is an uncharacterized protein from Borreliella burgdorferi (strain ATCC 35210 / DSM 4680 / CIP 102532 / B31) (Borrelia burgdorferi).